We begin with the raw amino-acid sequence, 1140 residues long: Envelopment polyprotein (1140 aa).

A signal peptide spans 1–17; it reads MVGWVCIFLVVLTTATA. The Lumenal portion of the chain corresponds to 18–480; the sequence is GLTRNLYELK…AHSLAVELCV (463 aa). 6 disulfide bridges follow: Cys-30-Cys-155, Cys-64-Cys-161, Cys-113-Cys-132, Cys-137-Cys-142, Cys-179-Cys-189, and Cys-214-Cys-251. Asn-138 carries N-linked (GlcNAc...) asparagine; by host glycosylation. Asn-351 carries N-linked (GlcNAc...) asparagine; by host glycosylation. 4 cysteine pairs are disulfide-bonded: Cys-380/Cys-439, Cys-384/Cys-393, Cys-409/Cys-428, and Cys-456/Cys-479. Asn-403 carries N-linked (GlcNAc...) asparagine; by host glycosylation. Residues 490–510 traverse the membrane as a helical segment; it reads ALLITFCFGWLLIPAVTLIIL. The Cytoplasmic portion of the chain corresponds to 511 to 631; the sequence is KILRLLTFSC…LGVFRYKSRC (121 aa). Residues 520-537 are binding to the ribonucleoprotein; that stretch reads CSHYSTESKFKVILERVK. 2 consecutive CCHC-type zinc fingers follow at residues 549–569 and 574–595; these read CDIC…KKSC and CPYC…FAIC. Binding to the ribonucleoprotein stretches follow at residues 592-609, 596-607, and 615-629; these read FAIC…KKSL, KLTNRFQENLKK, and RKGC…RYKS. In terms of domain architecture, ITAM spans 615-638; that stretch reads RKGCYRTLGVFRYKSRCYVGLVWG. Phosphotyrosine occurs at positions 619 and 632. The YxxL signature appears at 619–622; it reads YRTL. Residues 632–652 traverse the membrane as a helical segment; sequence YVGLVWGILLTTELIIWAASA. The Lumenal portion of the chain corresponds to 653–1108; that stretch reads DTPLMESGWS…EWLLGILNGN (456 aa). 8 cysteine pairs are disulfide-bonded: Cys-739–Cys-774, Cys-743–Cys-781, Cys-755–Cys-888, Cys-769–Cys-899, Cys-784–Cys-907, Cys-810–Cys-819, Cys-827–Cys-836, and Cys-867–Cys-871. The tract at residues 761 to 781 is fusion loop; that stretch reads YQYETSWGCNPPDCPGVGTGC. Asn-931 is a glycosylation site (N-linked (GlcNAc...) asparagine; by host). 5 cysteine pairs are disulfide-bonded: Cys-973-Cys-1003, Cys-996-Cys-1048, Cys-1013-Cys-1018, Cys-1049-Cys-1054, and Cys-1088-Cys-1092. The chain crosses the membrane as a helical span at residues 1109-1129; sequence WVVVAVLIVILILSILLFSFF. The tract at residues 1125–1140 is binding to the ribonucleoprotein; it reads LFSFFCPVRSRKNKAN. The Cytoplasmic portion of the chain corresponds to 1130–1140; that stretch reads CPVRSRKNKAN.

This sequence belongs to the hantavirus envelope glycoprotein family. In terms of assembly, homodimer. Homotetramer; forms heterotetrameric Gn-Gc spikes in the pre-fusion conformation. Interacts (via C-terminus) with the nucleoprotein. Interacts with host TUFM; this interaction contributes to the virus-induced degradation of mitochondria by autophagy, which leads to degradation of host MAVS and inhibition of type I interferon (IFN) responses. Interacts with host MAP1LC3B; this interaction contributes to the virus-induced degradation of mitochondria by autophagy, which leads to degradation of host MAVS and inhibition of type I interferon (IFN) responses. Homodimer. Homotetramer; forms heterotetrameric Gn-Gc spikes in the pre-fusion conformation. Homotrimer; forms homotrimer in the post-fusion conformation at acidic pH. Interacts (via C-terminus) with the nucleoprotein. Post-translationally, envelope polyprotein precursor is quickly cleaved in vivo just after synthesis, presumably by host signal peptidase.

Its subcellular location is the virion membrane. It is found in the host cell surface. The protein resides in the host Golgi apparatus membrane. The protein localises to the host endoplasmic reticulum membrane. It localises to the host mitochondrion. Its function is as follows. Forms homotetramers with glycoprotein C at the surface of the virion. Attaches the virion to host cell receptors including integrin ITGAV/ITGB3. This attachment induces virion internalization predominantly through clathrin-dependent endocytosis. Mediates the assembly and budding of infectious virus particles through its interaction with the nucleocapsid protein and the viral genome. May dysregulate normal immune and endothelial cell responses through an ITAM motif. Translocates to mitochondria, binds to host TUFM and recruits MAP1LC3B. These interactions induce mitochondrial autophagy and therefore destruction of host MAVS leading to inhibition of type I interferon (IFN) responses. Concomitant breakdown of glycoprotein N is apparently prevented by the nucleoprotein that may inhibit Gn-stimulated autophagosome-lysosome fusion. Interacts with the viral genomic RNA. Forms homotetramers with glycoprotein N at the surface of the virion. Attaches the virion to host cell receptors including integrin ITGAV/ITGB3. This attachment induces virion internalization predominantly through clathrin-dependent endocytosis. Class II fusion protein that promotes fusion of viral membrane with host endosomal membrane after endocytosis of the virion. The chain is Envelopment polyprotein (GP) from Sin Nombre orthohantavirus (SNV).